We begin with the raw amino-acid sequence, 257 residues long: tRNA (guanine-N(7)-)-methyltransferase (257 aa).

The interval 1-58 is disordered; sequence MQPIEQPGTGPDDITPESQDTNTAESAESGAETGHPRRIRSFVRRAGRTSTGQQRAIN. The segment covering 16–26 has biased composition (polar residues); the sequence is PESQDTNTAES. Residues 36–47 show a composition bias toward basic residues; the sequence is PRRIRSFVRRAG. S-adenosyl-L-methionine contacts are provided by Glu89, Glu114, Asp141, and Asp164. Residue Asp164 is part of the active site. A substrate-binding site is contributed by Lys168. Residues 170–175 are interaction with RNA; that stretch reads RHNKRR. Substrate-binding positions include Asp200 and 235–238; that span reads TKFE.

Belongs to the class I-like SAM-binding methyltransferase superfamily. TrmB family.

It catalyses the reaction guanosine(46) in tRNA + S-adenosyl-L-methionine = N(7)-methylguanosine(46) in tRNA + S-adenosyl-L-homocysteine. It participates in tRNA modification; N(7)-methylguanine-tRNA biosynthesis. Functionally, catalyzes the formation of N(7)-methylguanine at position 46 (m7G46) in tRNA. This Ralstonia pickettii (strain 12J) protein is tRNA (guanine-N(7)-)-methyltransferase.